Consider the following 206-residue polypeptide: CASP-like protein 1F1 (206 aa).

Over 1 to 43 (MCFQFSILYTCYLAHFGVFPRKYLVMAGIEAKFQQNPPLGTHK) the chain is Cytoplasmic. Residues 44 to 64 (LFLGAHICLRILTVTATLTAA) traverse the membrane as a helical segment. Topologically, residues 65 to 92 (WMMITSKQTVEVYGIQVEAKYSYSSAFK) are extracellular. The chain crosses the membrane as a helical span at residues 93–113 (FFSYANAIACGCSVLTLFPAF). Residues 114-124 (SLFYRGSTPMK) lie on the Cytoplasmic side of the membrane. A helical membrane pass occupies residues 125–145 (FFFLFLHDLCMMSLVLAGCAA). Over 146–177 (ATAIGYVGRYGNNHAGWMAICDQFDEYCNRIR) the chain is Extracellular. Residues 178-198 (LSLMFSYLAFVFILMLTIMSA) form a helical membrane-spanning segment. Over 199–206 (NKSREIRV) the chain is Cytoplasmic.

This sequence belongs to the Casparian strip membrane proteins (CASP) family. In terms of assembly, homodimer and heterodimers.

It localises to the cell membrane. The sequence is that of CASP-like protein 1F1 from Vitis vinifera (Grape).